A 953-amino-acid polypeptide reads, in one-letter code: TPR repeat-containing protein ZIP4 (953 aa).

A TPR 1 repeat occupies 129 to 162; the sequence is ASFFHRSGLAWLDLGRVDLASACFEKATPLVSAA. Residues 248–269 form a disordered region; the sequence is AASPSSSSPRTPPYGGATPKTP. 2 TPR repeats span residues 432 to 465 and 473 to 506; these read HALL…VSRD and ADCF…EPNI. The segment at 924 to 953 is disordered; it reads RVSGDEPDECSQEEAPKASISGSMSQPVLV. Residues 943 to 953 are compositionally biased toward polar residues; it reads ISGSMSQPVLV.

The protein localises to the nucleus. Its subcellular location is the chromosome. Required for crossover formation, complete synapsis of homologous chromosomes and bivalent formation during meiosis. Is specific to recombination events resulting in interference-sensitive crossovers (class I meiotic crossover) and works cooperatively with MER3 to promote crossovers. In Oryza sativa subsp. indica (Rice), this protein is TPR repeat-containing protein ZIP4.